Reading from the N-terminus, the 111-residue chain is Large ribosomal subunit protein bL20c (111 aa).

The protein belongs to the bacterial ribosomal protein bL20 family.

It is found in the plastid. Its subcellular location is the chloroplast. Functionally, binds directly to 23S ribosomal RNA and is necessary for the in vitro assembly process of the 50S ribosomal subunit. It is not involved in the protein synthesizing functions of that subunit. The protein is Large ribosomal subunit protein bL20c of Ostreococcus tauri.